A 487-amino-acid polypeptide reads, in one-letter code: MSLPNSSCLLEDKMCEGNKTTMASPQLMPLVVVLSTISLVTVGLNLLVLYAVRSERKLHTVGNLYIVSLSVADLIVGAVVMPMNILYLLMSKWSLGRPLCLFWLSMDYVASTASIFSVFILCIDRYRSVQQPLRYLKYRTKTRASATILGAWFLSFLWVIPILGWNHFRQQISVRREDKCETDFYDVTWFKVMTAIINFYLPTLLMLWFYAKIYKAVQKHCQHRELINGSLPSFSEIKLRPENPKGDAKKPGKESPWEVLKRKPKDAGGGSVLKSPSQTPKEMKSPVVFSQEDDGEVDKLHCFPLDIVQMQTVAEGSSRDYVAINQSHGQLKTDEQGLNTHGASEISEDQMLGDSQSFSRTDSDTTTETAPGKGKLRSGSNTGLDYIKFTWKRLRSHSRQYVSGLHMNRERKAAKQLGFIMAAFILCWIPYFIFFMVIAFCKNCCNEHLHMFTIWLGYINSTLNPLIYPLCNENFKKTFKRILHIRS.

Residues 1–29 (MSLPNSSCLLEDKMCEGNKTTMASPQLMP) are Extracellular-facing. 2 N-linked (GlcNAc...) asparagine glycosylation sites follow: asparagine 5 and asparagine 18. Residues 30 to 50 (LVVVLSTISLVTVGLNLLVLY) form a helical membrane-spanning segment. Residues 51-64 (AVRSERKLHTVGNL) are Cytoplasmic-facing. Residues 65–89 (YIVSLSVADLIVGAVVMPMNILYLL) traverse the membrane as a helical segment. Over 90 to 97 (MSKWSLGR) the chain is Extracellular. A helical membrane pass occupies residues 98 to 123 (PLCLFWLSMDYVASTASIFSVFILCI). An intrachain disulfide couples cysteine 100 to cysteine 180. Aspartate 107 and threonine 112 together coordinate histamine. An important for agonist binding region spans residues 107 to 112 (DYVAST). The Cytoplasmic portion of the chain corresponds to 124-144 (DRYRSVQQPLRYLKYRTKTRA). Residues threonine 140 and threonine 142 each carry the phosphothreonine modification. A helical membrane pass occupies residues 145-164 (SATILGAWFLSFLWVIPILG). Residues 165–188 (WNHFRQQISVRREDKCETDFYDVT) are Extracellular-facing. Residues 189–211 (WFKVMTAIINFYLPTLLMLWFYA) traverse the membrane as a helical segment. Histamine is bound at residue asparagine 198. Over 212–416 (KIYKAVQKHC…MNRERKAAKQ (205 aa)) the chain is Cytoplasmic. Serine 230 carries the phosphoserine modification. Residues 238 to 261 (KLRPENPKGDAKKPGKESPWEVLK) show a composition bias toward basic and acidic residues. Residues 238–286 (KLRPENPKGDAKKPGKESPWEVLKRKPKDAGGGSVLKSPSQTPKEMKSP) are disordered. Position 279 is a phosphothreonine (threonine 279). Serine 344 and serine 347 each carry phosphoserine. A disordered region spans residues 345 to 379 (EISEDQMLGDSQSFSRTDSDTTTETAPGKGKLRSG). Positions 353-369 (GDSQSFSRTDSDTTTET) are enriched in polar residues. A phosphoserine mark is found at serine 380, serine 396, and serine 398. The helical transmembrane segment at 417–440 (LGFIMAAFILCWIPYFIFFMVIAF) threads the bilayer. An important for agonist binding region spans residues 424–428 (FILCW). Tyrosine 431 is a histamine binding site. Cysteine 441 and cysteine 444 are oxidised to a cystine. The Extracellular segment spans residues 441–446 (CKNCCN). The chain crosses the membrane as a helical span at residues 447-469 (EHLHMFTIWLGYINSTLNPLIYP). The Cytoplasmic segment spans residues 470-487 (LCNENFKKTFKRILHIRS).

The protein belongs to the G-protein coupled receptor 1 family. In terms of processing, phosphorylation at sites in the second and third cytoplasmic loops independently contribute to agonist-induced receptor down-regulation.

The protein resides in the cell membrane. In terms of biological role, G-protein-coupled receptor for histamine, a biogenic amine that functions as an immune modulator and a neurotransmitter. Through the H1 receptor, histamine mediates the contraction of smooth muscles and increases capillary permeability due to contraction of terminal venules. Also mediates neurotransmission in the central nervous system and thereby regulates circadian rhythms, emotional and locomotor activities as well as cognitive functions. This chain is Histamine H1 receptor, found in Pongo pygmaeus (Bornean orangutan).